The primary structure comprises 340 residues: Short-chain dehydrogenase/reductase ffsI (340 aa).

L46, R71, D96, N123, Y211, and K215 together coordinate NADP(+). Catalysis depends on Y211, which acts as the Proton acceptor. The active-site Lowers pKa of active site Tyr is the K215.

This sequence belongs to the short-chain dehydrogenases/reductases (SDR) family.

Its pathway is mycotoxin biosynthesis. Short-chain dehydrogenase/reductase; part of the gene cluster that mediates the biosynthesis of the cytotoxic leucine-containing cytochalasans, including aspochalasin C, aspochalasin E, TMC-169, flavichalasine F, aspergillin PZ, aspochalasin M and flavichalasine G. The first step in the pathway is catalyzed by the hybrid PKS-NRPS ffsA that utilizes 8 units of malonyl-CoA to iteratively assemble the octaketide chain before addition of L-leucine by the C-terminal NRPS modules. Because ffsA lacks a designated enoylreductase (ER) domain, the required activity is provided the enoyl reductase fssC. The methyltransferase (MT) domain of ffsA catalyzes the alpha-methylation at C10 and C14 using S-adenosyl-L-methionine as the methyl-donating cosubstrate. Reduction by the hydrolyase ffsE, followed by dehydration and intra-molecular Diels-Alder cyclization by the Diels-Alderase ffsF then yield the required isoindolone-fused macrocycle. A number of oxidative steps catalyzed by the tailoring cytochrome P450 monooxygenase ffsD, the FAD-linked oxidoreductase ffsJ and the short-chain dehydrogenase/reductase ffsI, are further required to afford the final products. In Aspergillus flavipes, this protein is Short-chain dehydrogenase/reductase ffsI.